The chain runs to 336 residues: Probable long-chain-alcohol O-fatty-acyltransferase 8 (336 aa).

A run of 8 helical transmembrane segments spans residues serine 7–serine 27, serine 38–phenylalanine 58, serine 59–phenylalanine 79, glycine 82–isoleucine 102, tryptophan 117–tyrosine 135, leucine 152–glycine 172, methionine 228–isoleucine 248, and proline 284–phenylalanine 304.

Belongs to the wax synthase family.

Its subcellular location is the membrane. It catalyses the reaction a long chain fatty alcohol + a fatty acyl-CoA = a wax ester + CoA. Catalyzes the final step in the synthesis of long-chain linear esters (waxes). This is Probable long-chain-alcohol O-fatty-acyltransferase 8 from Arabidopsis thaliana (Mouse-ear cress).